The sequence spans 340 residues: Ketol-acid reductoisomerase (NADP(+)) (340 aa).

The KARI N-terminal Rossmann domain maps to Ala2 to Thr182. Residues Phe25–Gln28, Ser51, Ser53, and Asp83–Gln86 each bind NADP(+). Residue His108 is part of the active site. Gly134 contributes to the NADP(+) binding site. The region spanning Thr183–Val328 is the KARI C-terminal knotted domain. Mg(2+) contacts are provided by Asp191, Glu195, Glu227, and Glu231. Ser252 serves as a coordination point for substrate.

This sequence belongs to the ketol-acid reductoisomerase family. Mg(2+) is required as a cofactor.

The catalysed reaction is (2R)-2,3-dihydroxy-3-methylbutanoate + NADP(+) = (2S)-2-acetolactate + NADPH + H(+). It carries out the reaction (2R,3R)-2,3-dihydroxy-3-methylpentanoate + NADP(+) = (S)-2-ethyl-2-hydroxy-3-oxobutanoate + NADPH + H(+). It participates in amino-acid biosynthesis; L-isoleucine biosynthesis; L-isoleucine from 2-oxobutanoate: step 2/4. It functions in the pathway amino-acid biosynthesis; L-valine biosynthesis; L-valine from pyruvate: step 2/4. Involved in the biosynthesis of branched-chain amino acids (BCAA). Catalyzes an alkyl-migration followed by a ketol-acid reduction of (S)-2-acetolactate (S2AL) to yield (R)-2,3-dihydroxy-isovalerate. In the isomerase reaction, S2AL is rearranged via a Mg-dependent methyl migration to produce 3-hydroxy-3-methyl-2-ketobutyrate (HMKB). In the reductase reaction, this 2-ketoacid undergoes a metal-dependent reduction by NADPH to yield (R)-2,3-dihydroxy-isovalerate. The protein is Ketol-acid reductoisomerase (NADP(+)) of Chloroflexus aurantiacus (strain ATCC 29366 / DSM 635 / J-10-fl).